Here is a 438-residue protein sequence, read N- to C-terminus: Xylose isomerase (438 aa).

Active-site residues include His100 and Asp103. Mg(2+) is bound by residues Glu231, Glu267, His270, Asp295, Asp306, Asp308, and Asp338.

The protein belongs to the xylose isomerase family. Homotetramer. Mg(2+) serves as cofactor.

It is found in the cytoplasm. It carries out the reaction alpha-D-xylose = alpha-D-xylulofuranose. This chain is Xylose isomerase, found in Thermoanaerobacter sp. (strain X514).